The chain runs to 265 residues: 5'-nucleotidase SurE (265 aa).

4 residues coordinate a divalent metal cation: Asp8, Asp9, Ser39, and Asn96.

It belongs to the SurE nucleotidase family. It depends on a divalent metal cation as a cofactor.

It is found in the cytoplasm. The enzyme catalyses a ribonucleoside 5'-phosphate + H2O = a ribonucleoside + phosphate. In terms of biological role, nucleotidase that shows phosphatase activity on nucleoside 5'-monophosphates. This Dehalococcoides mccartyi (strain ATCC BAA-2100 / JCM 16839 / KCTC 5957 / BAV1) protein is 5'-nucleotidase SurE.